The primary structure comprises 1712 residues: Neurexin-2 (1712 aa).

Positions 1–28 (MASGSRWRPTPPPLLLLLLLALAARADG) are cleaved as a signal peptide. The 178-residue stretch at 29–206 (LEFGGGPGQW…LRGATADPLC (178 aa)) folds into the Laminin G-like 1 domain. Residues 29–1636 (LEFGGGPGQW…EVIRESSSTT (1608 aa)) lie on the Extracellular side of the membrane. A glycan (N-linked (GlcNAc...) asparagine) is linked at Asn60. One can recognise an EGF-like 1 domain in the interval 202–242 (ADPLCAPARNPCANGGLCTVLAPGEVGCDCSHTGFGGKFCS). 3 disulfides stabilise this stretch: Cys206–Cys219, Cys213–Cys229, and Cys231–Cys241. Laminin G-like domains lie at 289–486 (VATF…SFRC) and 493–686 (DPVT…APFC). Residue Asp335 coordinates Ca(2+). Asn338 is a glycosylation site (N-linked (GlcNAc...) asparagine). Ca(2+)-binding residues include Leu352 and Met420. 5 disulfide bridges follow: Cys450–Cys486, Cys657–Cys686, Cys694–Cys705, Cys699–Cys714, and Cys716–Cys726. The EGF-like 2 domain occupies 690 to 727 (TLKQCASAPCRNGGVCREGWNRFICDCIGTGFLGRVCE). Laminin G-like domains follow at residues 732–904 (VLSY…ITYC) and 918–1093 (DPVT…ERGC). Ca(2+) contacts are provided by Asp779 and Leu796. N-linked (GlcNAc...) asparagine glycosylation occurs at Asn841. Residue Arg854 coordinates Ca(2+). 4 cysteine pairs are disulfide-bonded: Cys1065-Cys1093, Cys1100-Cys1111, Cys1105-Cys1120, and Cys1122-Cys1132. An EGF-like 3 domain is found at 1096–1133 (PSTTCTEESCANQGVCLQQWDGFTCDCTMTSYGGPVCN). The 209-residue stretch at 1137–1345 (TTYIFGKGGA…HLRLVGEGPS (209 aa)) folds into the Laminin G-like 6 domain. Residues Asp1189 and Val1206 each coordinate Ca(2+). Asn1236 carries N-linked (GlcNAc...) asparagine glycosylation. Residues Ile1288 and Asn1290 each coordinate Ca(2+). Residues 1373–1392 (ATTTTRRGRSPTLRDSTTQN) form a disordered region. The O-linked (Xyl...) (heparan sulfate) serine glycan is linked to Ser1400. 2 disordered regions span residues 1458 to 1489 (ATQDTLPPPAARRPPSGGPCQAERDDSDCEEP) and 1525 to 1626 (TLLS…PGAV). A helical transmembrane segment spans residues 1637–1657 (GMVVGIVAAAALCILILLYAM). At 1658–1712 (YKYRNRDEGSYQVDQSRNYISNSAQSNGAVVKEKAPAAPKTPSKAKKNKDKEYYV) the chain is on the cytoplasmic side. Residues 1679-1712 (NSAQSNGAVVKEKAPAAPKTPSKAKKNKDKEYYV) form a disordered region.

Belongs to the neurexin family. In terms of assembly, the laminin G-like domain 1 binds to NXPH1. Interacts with PATJ. Interacts with CBLN1, CBLN2 and, less avidly, with CBLN4. Specific isoforms bind neuroligins NLGN1, NLGN2 and NLGN3. Specific isoforms bind to alpha-dystroglycan. Interacts (via Laminin G-like 1 domain) with IGSF21 (Ig-like 1 domain) in a trans-interaction manner. Interacts with CLSTN3. O-glycosylated; contains heparan sulfate. Heparan sulfate attachment is required for synapse development by mediating interactions with neuroligins. As to expression, predominantly expressed in brain.

Its subcellular location is the presynaptic cell membrane. Its function is as follows. Neuronal cell surface protein that may be involved in cell recognition and cell adhesion. May mediate intracellular signaling. This is Neurexin-2 (NRXN2) from Homo sapiens (Human).